The sequence spans 66 residues: MDHSLNSLNNFDFLARSFARMHAEGRPVDILAVTGNMDEEHRTWFCARYAWYCQQMMQTRELELEH.

It belongs to the GlgS family.

Functionally, major determinant of cell surface composition. Negatively regulates motility, adhesion and synthesis of biofilm exopolysaccharides. This is Surface composition regulator from Escherichia coli O127:H6 (strain E2348/69 / EPEC).